A 370-amino-acid polypeptide reads, in one-letter code: Trans-enoyl reductase xenG (370 aa).

The tract at residues 1–32 (MASTGLPQLPPSQKAVIQSEKTPGAFEVSENR) is disordered. NADP(+) contacts are provided by residues 54 to 57 (CDWK), 177 to 180 (STAS), 200 to 203 (SPKN), Tyr-218, 265 to 266 (FE), and 356 to 357 (VS).

Belongs to the zinc-containing alcohol dehydrogenase family. Monomer.

It participates in mycotoxin biosynthesis. Functionally, trans-enoyl reductase; part of the gene cluster that mediates the biosynthesis of xenoacremones such as xenoacremone A, a compound that shows inhibitory activity toward the PI3K/AKT signaling pathway and which has the ability to induce apoptosis of A549 lung cancer cells. Within the pathway, cooperation of the hybrid PKS-NRPS xenE and the trans-acting enoyl reductase xenG is responsible for the formation of the reduced tyrosine-nonaketide derivative. The alpha/beta hydrolase xenA then accelerates intramolecular nucleophilic attack to give a pyrrolidone derivative. Subsequently, three enzymes, xenF, xenD, and xenC, coordinately participate in the conversion to xenoacremone B. XenF catalyzes sigmatropic rearrangement to form an A-ring, which leads to an unusual intermediate with a hexane ring, which is required for the formation of the tricarbocyclic product. Epoxidation catalyzed by xenD and the formation of the paracyclophane ether catalyzed by xenC initiate a spontaneous intramolecular Diels-Alder (IMDA) reaction to yield xenoacremone B. Spontaneous hydration of xenoacremone B leads to the formation of xenoacremone A, which undergoes subsequent methylation to afford xenoacremone C. The chain is Trans-enoyl reductase xenG from Xenoacremonium sinensis (Endophyte fungus).